The chain runs to 758 residues: Probable C-mannosyltransferase DPY19L2 (758 aa).

The disordered stretch occupies residues 1 to 58; it reads MRKQGVSSKRLQSSGRSQSKGRRGASLAREPEVEEEMEKSALGGGKLPRGSWRSSPGR. Topologically, residues 1–107 are nuclear; the sequence is MRKQGVSSKR…ELQARRFSSR (107 aa). Residues 7–18 show a composition bias toward low complexity; it reads SSKRLQSSGRSQ. The chain crosses the membrane as a helical span at residues 108-128; it reads TTLGIAVFVAILHWLHLVTLF. The Perinuclear space portion of the chain corresponds to 129 to 194; the sequence is ENDRHFSHLS…INAIKRFHLY (66 aa). Residues 195–215 traverse the membrane as a helical segment; sequence PEVIIASWYCTFMGIMNLFGL. The Nuclear portion of the chain corresponds to 216–241; it reads ETKTCWNVTRIEPLNEVQSCEGLGDP. 2 consecutive transmembrane segments (helical) span residues 242–262 and 263–283; these read ACFY…LFFM and YGAY…CFFF. The Nuclear segment spans residues 284 to 296; that stretch reads NHGEATRVMWTPP. Residues 297-317 traverse the membrane as a helical segment; the sequence is LRESFSYPFLVLQMCILTLIL. Over 318–343 the chain is Perinuclear space; sequence RTSSNDRRPFIALCLSNVAFMLPWQF. A helical membrane pass occupies residues 344–364; the sequence is AQFILFTQIASLFPMYVVGYI. Topologically, residues 365 to 371 are nuclear; that stretch reads EPSKFQK. Residues 372 to 392 form a helical membrane-spanning segment; that stretch reads IIYMNMISVTLSFILMFGNSM. Over 393-422 the chain is Perinuclear space; that stretch reads YLSSYYSSSLLMTWAIILKRNEIQKLGVSK. A helical membrane pass occupies residues 423-443; sequence LNFWLIQGSAWWCGTIILKFL. Residues 444 to 488 are Nuclear-facing; sequence TSKILGVSDHIRLSDLIAARILRYTDFDTLIYTCAPEFDFMEKAT. A helical membrane pass occupies residues 489–509; it reads PLRYTKTLLLPVVMVITCFIF. At 510–533 the chain is on the perinuclear space side; that stretch reads KKTVRDISYVLATNIYLRKQLLEH. The helical transmembrane segment at 534-554 threads the bilayer; the sequence is SELAFHTLQLLVFTALAILIM. At 555–758 the chain is on the nuclear side; the sequence is RLKMFLTPHM…NSVYRVLKVN (204 aa).

The protein belongs to the dpy-19 family. Interacts with FAM209. Widely expressed with high expression in testis. Not detectable in ejaculated sperm (at protein level).

It localises to the nucleus inner membrane. Its function is as follows. Probable C-mannosyltransferase that mediates C-mannosylation of tryptophan residues on target proteins. Functionally, required during spermatogenesis for sperm head elongation and acrosome formation. Also plays a role in acrosome attachment to the nuclear envelope. The chain is Probable C-mannosyltransferase DPY19L2 from Homo sapiens (Human).